The sequence spans 465 residues: Interferon-inducible GTPase 5 (465 aa).

In terms of domain architecture, IRG-type G spans 53–235 (TRLEVGVTGE…PLLMSTWERD (183 aa)). GTP is bound by residues 62 to 69 (ESGAGKSS), 87 to 91 (TGVVE), 169 to 171 (KVD), and 216 to 218 (SNL). Phosphoserine occurs at positions 247 and 304. The segment at 405-438 (EEEEDTQPDVSLEAAGDNGVEKRGSGEGSMEEAP) is disordered.

It belongs to the TRAFAC class dynamin-like GTPase superfamily. IRG family.

It is found in the cell projection. Its subcellular location is the cilium. The protein resides in the flagellum. It localises to the lipid droplet. The enzyme catalyses GTP + H2O = GDP + phosphate + H(+). Required for sperm motility and therefore male fertility, via positive regulation of spermatozoa fibrous sheath formation. The protein is Interferon-inducible GTPase 5 (IRGC) of Bos taurus (Bovine).